A 552-amino-acid polypeptide reads, in one-letter code: Dihydroxy-acid dehydratase (552 aa).

D78 contributes to the Mg(2+) binding site. C119 contributes to the [2Fe-2S] cluster binding site. D120 and K121 together coordinate Mg(2+). K121 is modified (N6-carboxylysine). [2Fe-2S] cluster is bound at residue C191. Residue E442 participates in Mg(2+) binding. The active-site Proton acceptor is S468.

The protein belongs to the IlvD/Edd family. Homodimer. The cofactor is [2Fe-2S] cluster. Mg(2+) is required as a cofactor.

The enzyme catalyses (2R)-2,3-dihydroxy-3-methylbutanoate = 3-methyl-2-oxobutanoate + H2O. It catalyses the reaction (2R,3R)-2,3-dihydroxy-3-methylpentanoate = (S)-3-methyl-2-oxopentanoate + H2O. The protein operates within amino-acid biosynthesis; L-isoleucine biosynthesis; L-isoleucine from 2-oxobutanoate: step 3/4. Its pathway is amino-acid biosynthesis; L-valine biosynthesis; L-valine from pyruvate: step 3/4. Functionally, functions in the biosynthesis of branched-chain amino acids. Catalyzes the dehydration of (2R,3R)-2,3-dihydroxy-3-methylpentanoate (2,3-dihydroxy-3-methylvalerate) into 2-oxo-3-methylpentanoate (2-oxo-3-methylvalerate) and of (2R)-2,3-dihydroxy-3-methylbutanoate (2,3-dihydroxyisovalerate) into 2-oxo-3-methylbutanoate (2-oxoisovalerate), the penultimate precursor to L-isoleucine and L-valine, respectively. This chain is Dihydroxy-acid dehydratase, found in Caldicellulosiruptor bescii (strain ATCC BAA-1888 / DSM 6725 / KCTC 15123 / Z-1320) (Anaerocellum thermophilum).